The sequence spans 727 residues: 1,4-alpha-glucan branching enzyme GlgB (727 aa).

Asp405 serves as the catalytic Nucleophile. The Proton donor role is filled by Glu458.

Belongs to the glycosyl hydrolase 13 family. GlgB subfamily. As to quaternary structure, monomer.

The enzyme catalyses Transfers a segment of a (1-&gt;4)-alpha-D-glucan chain to a primary hydroxy group in a similar glucan chain.. The protein operates within glycan biosynthesis; glycogen biosynthesis. Catalyzes the formation of the alpha-1,6-glucosidic linkages in glycogen by scission of a 1,4-alpha-linked oligosaccharide from growing alpha-1,4-glucan chains and the subsequent attachment of the oligosaccharide to the alpha-1,6 position. The protein is 1,4-alpha-glucan branching enzyme GlgB of Yersinia pestis bv. Antiqua (strain Antiqua).